Reading from the N-terminus, the 399-residue chain is Probable dual-specificity RNA methyltransferase RlmN (399 aa).

The Proton acceptor role is filled by Glu-97. One can recognise a Radical SAM core domain in the interval 103–381 (YPDRATVCVS…CTVRVERGVS (279 aa)). A disulfide bond links Cys-110 and Cys-386. [4Fe-4S] cluster contacts are provided by Cys-117, Cys-121, and Cys-124. S-adenosyl-L-methionine is bound by residues 203-204 (GE), Ser-235, 258-260 (SLH), and Asn-343. Cys-386 serves as the catalytic S-methylcysteine intermediate.

Belongs to the radical SAM superfamily. RlmN family. [4Fe-4S] cluster serves as cofactor.

It localises to the cytoplasm. The catalysed reaction is adenosine(2503) in 23S rRNA + 2 reduced [2Fe-2S]-[ferredoxin] + 2 S-adenosyl-L-methionine = 2-methyladenosine(2503) in 23S rRNA + 5'-deoxyadenosine + L-methionine + 2 oxidized [2Fe-2S]-[ferredoxin] + S-adenosyl-L-homocysteine. It carries out the reaction adenosine(37) in tRNA + 2 reduced [2Fe-2S]-[ferredoxin] + 2 S-adenosyl-L-methionine = 2-methyladenosine(37) in tRNA + 5'-deoxyadenosine + L-methionine + 2 oxidized [2Fe-2S]-[ferredoxin] + S-adenosyl-L-homocysteine. In terms of biological role, specifically methylates position 2 of adenine 2503 in 23S rRNA and position 2 of adenine 37 in tRNAs. This is Probable dual-specificity RNA methyltransferase RlmN from Roseiflexus sp. (strain RS-1).